The chain runs to 624 residues: Bifunctional 3'-phosphoadenosine 5'-phosphosulfate synthase 1 (624 aa).

N-acetylmethionine is present on Met-1. The adenylyl-sulfate kinase stretch occupies residues 1-225; that stretch reads MELPGSLCKK…VVELLQERDI (225 aa). Lys-12 is subject to N6-acetyllysine. Position 62 to 67 (62 to 67) interacts with ATP; the sequence is GAGKTT. Adenosine 5'-phosphosulfate contacts are provided by residues 89 to 92, Phe-101, 106 to 109, 132 to 133, Lys-171, and 184 to 185; these read DNIR, REEN, IS, and GF. Residues Cys-207, Cys-212, 419-422, 521-525, and Ala-563 each bind ATP; these read QLRN and GRDPA. The tract at residues 234 to 624 is sulfate adenylyltransferase; sequence VKELYVPENK…AEYYKALEKA (391 aa).

The protein in the N-terminal section; belongs to the APS kinase family. This sequence in the C-terminal section; belongs to the sulfate adenylyltransferase family. As to quaternary structure, homodimer.

The catalysed reaction is sulfate + ATP + H(+) = adenosine 5'-phosphosulfate + diphosphate. It catalyses the reaction adenosine 5'-phosphosulfate + ATP = 3'-phosphoadenylyl sulfate + ADP + H(+). It participates in sulfur metabolism; sulfate assimilation. In terms of biological role, bifunctional enzyme with both ATP sulfurylase and APS kinase activity, which mediates two steps in the sulfate activation pathway. The first step is the transfer of a sulfate group to ATP to yield adenosine 5'-phosphosulfate (APS), and the second step is the transfer of a phosphate group from ATP to APS yielding 3'-phosphoadenylylsulfate (PAPS: activated sulfate donor used by sulfotransferase). In mammals, PAPS is the sole source of sulfate; APS appears to be only an intermediate in the sulfate-activation pathway. Required for normal biosynthesis of sulfated L-selectin ligands in endothelial cells. In Cavia porcellus (Guinea pig), this protein is Bifunctional 3'-phosphoadenosine 5'-phosphosulfate synthase 1 (PAPSS1).